Reading from the N-terminus, the 738-residue chain is 1,4-alpha-glucan branching enzyme GlgB (738 aa).

Asp417 (nucleophile) is an active-site residue. Catalysis depends on Glu472, which acts as the Proton donor.

The protein belongs to the glycosyl hydrolase 13 family. GlgB subfamily. In terms of assembly, monomer.

It carries out the reaction Transfers a segment of a (1-&gt;4)-alpha-D-glucan chain to a primary hydroxy group in a similar glucan chain.. Its pathway is glycan biosynthesis; glycogen biosynthesis. Functionally, catalyzes the formation of the alpha-1,6-glucosidic linkages in glycogen by scission of a 1,4-alpha-linked oligosaccharide from growing alpha-1,4-glucan chains and the subsequent attachment of the oligosaccharide to the alpha-1,6 position. This chain is 1,4-alpha-glucan branching enzyme GlgB, found in Burkholderia pseudomallei (strain 1106a).